The sequence spans 1160 residues: ATP-dependent helicase/deoxyribonuclease subunit B (1160 aa).

The protein belongs to the helicase family. AddB/RexB type 2 subfamily. As to quaternary structure, heterodimer of AddA and RexB. Mg(2+) serves as cofactor.

Functionally, the heterodimer acts as both an ATP-dependent DNA helicase and an ATP-dependent, dual-direction single-stranded exonuclease. Recognizes the chi site generating a DNA molecule suitable for the initiation of homologous recombination. This subunit has 5' -&gt; 3' nuclease activity but not helicase activity. The chain is ATP-dependent helicase/deoxyribonuclease subunit B from Lactobacillus helveticus (strain DPC 4571).